The chain runs to 20 residues: 7.2 kDa cytotoxin RVV-7 (20 aa).

In terms of assembly, monomer. Homodimerizes during storage at 30 degrees Celsius (observed after 3 days). In terms of tissue distribution, expressed by the venom gland.

Its subcellular location is the secreted. It is found in the target cell membrane. In terms of biological role, this three-finger cytotoxin shows cytotoxicity and direct nephrotoxicity. The cytotoxicity has been observed on B16F10 melanoma cells (EC(50)=2.56 uM) and on kidney proximal tubular epithelium LLCPK1 cells (EC(50)=4.79 uM); it is due to necrotic cell death and not to apoptosis. Direct nephrotoxicity has been deduced from binding to LLCPK1 cell line and to kidney membranes. In addition, after intravenous injection into mice tail vein, the toxin principally accumulates in kidney, but only minimally in blood, liver and brain. This chain is 7.2 kDa cytotoxin RVV-7, found in Daboia russelii (Russel's viper).